A 418-amino-acid chain; its full sequence is Tyrosine--tRNA ligase (418 aa).

Tyr34 contacts L-tyrosine. A 'HIGH' region motif is present at residues 39–48 (PTADSLHLGH). The L-tyrosine site is built by Tyr169 and Gln173. The short motif at 229–233 (KFGKS) is the 'KMSKS' region element. Lys232 lines the ATP pocket. One can recognise an S4 RNA-binding domain in the interval 352–418 (NNIVELLVSS…GKKKYFVLTY (67 aa)).

This sequence belongs to the class-I aminoacyl-tRNA synthetase family. TyrS type 1 subfamily. As to quaternary structure, homodimer.

It localises to the cytoplasm. It carries out the reaction tRNA(Tyr) + L-tyrosine + ATP = L-tyrosyl-tRNA(Tyr) + AMP + diphosphate + H(+). Its function is as follows. Catalyzes the attachment of tyrosine to tRNA(Tyr) in a two-step reaction: tyrosine is first activated by ATP to form Tyr-AMP and then transferred to the acceptor end of tRNA(Tyr). This Streptococcus pneumoniae (strain 70585) protein is Tyrosine--tRNA ligase.